We begin with the raw amino-acid sequence, 89 residues long: UPF0297 protein SEQ_2150 (89 aa).

It belongs to the UPF0297 family.

The chain is UPF0297 protein SEQ_2150 from Streptococcus equi subsp. equi (strain 4047).